A 142-amino-acid chain; its full sequence is UPF0305 protein MK0666 (142 aa).

This sequence belongs to the UPF0305 family.

In Methanopyrus kandleri (strain AV19 / DSM 6324 / JCM 9639 / NBRC 100938), this protein is UPF0305 protein MK0666.